Consider the following 393-residue polypeptide: S-adenosylmethionine synthase (393 aa).

Histidine 16 lines the ATP pocket. Position 18 (aspartate 18) interacts with Mg(2+). Residue glutamate 44 coordinates K(+). Residues glutamate 57 and glutamine 100 each coordinate L-methionine. Residues 100-110 (QSNDIAQGVDQ) are flexible loop. ATP-binding positions include 167 to 169 (DAK), 238 to 239 (RF), aspartate 247, 253 to 254 (RK), alanine 270, and lysine 274. Aspartate 247 serves as a coordination point for L-methionine. Lysine 278 is a binding site for L-methionine.

The protein belongs to the AdoMet synthase family. In terms of assembly, homotetramer; dimer of dimers. Requires Mg(2+) as cofactor. It depends on K(+) as a cofactor.

The protein resides in the cytoplasm. The enzyme catalyses L-methionine + ATP + H2O = S-adenosyl-L-methionine + phosphate + diphosphate. The protein operates within amino-acid biosynthesis; S-adenosyl-L-methionine biosynthesis; S-adenosyl-L-methionine from L-methionine: step 1/1. Catalyzes the formation of S-adenosylmethionine (AdoMet) from methionine and ATP. The overall synthetic reaction is composed of two sequential steps, AdoMet formation and the subsequent tripolyphosphate hydrolysis which occurs prior to release of AdoMet from the enzyme. The protein is S-adenosylmethionine synthase of Methylibium petroleiphilum (strain ATCC BAA-1232 / LMG 22953 / PM1).